A 496-amino-acid polypeptide reads, in one-letter code: Cytochrome P450 71B14 (496 aa).

A helical membrane pass occupies residues 1 to 21 (MIWWFIVGASFFFAFILIAKD). Position 436 (Cys-436) interacts with heme.

The protein belongs to the cytochrome P450 family. The cofactor is heme.

The protein localises to the membrane. The polypeptide is Cytochrome P450 71B14 (CYP71B14) (Arabidopsis thaliana (Mouse-ear cress)).